The following is a 243-amino-acid chain: Chalcone--flavanone isomerase (243 aa).

Residues Thr-50, Asn-115, and Ser-192 each coordinate substrate.

The protein belongs to the chalcone isomerase family.

The enzyme catalyses a chalcone = a flavanone.. The protein operates within secondary metabolite biosynthesis; flavonoid biosynthesis. Functionally, catalyzes the intramolecular cyclization of bicyclic chalcones into tricyclic (S)-flavanones. Responsible for the isomerization of 4,2',4',6'-tetrahydroxychalcone (also termed chalcone) into naringenin. The protein is Chalcone--flavanone isomerase (CHI) of Ipomoea batatas (Sweet potato).